The chain runs to 441 residues: GPI mannosyltransferase 2 (441 aa).

The next 10 helical transmembrane spans lie at 4–24 (MTVLSPSAGSQSACSLGLILV), 35–55 (ILFGLWKALIFLVIVICPGLG), 115–135 (LLALLASVLVLYRLSVNIFGG), 143–163 (LCFLSAALHIISPAGAFLSAP), 165–185 (GEALFSLLNISGLYLYSSSVL), 199–223 (LLAAAVLISAATAVRSNGILGGVLF), 249–269 (VIVLGGCVIALGMAVPQYIAF), 306–326 (YWVVPNIPLFLLAMPILALLL), 361–381 (LAIIQALLAVLAFTSYHVQII), and 418–438 (VAVQAIMIYGLIHAVLFGSFL).

It belongs to the PIGV family.

It localises to the endoplasmic reticulum membrane. Its pathway is glycolipid biosynthesis; glycosylphosphatidylinositol-anchor biosynthesis. Mannosyltransferase involved in glycosylphosphatidylinositol-anchor biosynthesis. Transfers the second mannose to the glycosylphosphatidylinositol during GPI precursor assembly. This Aspergillus fumigatus (strain ATCC MYA-4609 / CBS 101355 / FGSC A1100 / Af293) (Neosartorya fumigata) protein is GPI mannosyltransferase 2 (gpi18).